Reading from the N-terminus, the 214-residue chain is tRNA (guanine-N(7)-)-methyltransferase (214 aa).

4 residues coordinate S-adenosyl-L-methionine: Glu-44, Glu-69, Asp-96, and Asp-118. Residue Asp-118 is part of the active site. Substrate is bound by residues Lys-122, Asp-154, and 191–194 (TEYE).

It belongs to the class I-like SAM-binding methyltransferase superfamily. TrmB family.

It carries out the reaction guanosine(46) in tRNA + S-adenosyl-L-methionine = N(7)-methylguanosine(46) in tRNA + S-adenosyl-L-homocysteine. It functions in the pathway tRNA modification; N(7)-methylguanine-tRNA biosynthesis. Functionally, catalyzes the formation of N(7)-methylguanine at position 46 (m7G46) in tRNA. This is tRNA (guanine-N(7)-)-methyltransferase from Listeria monocytogenes serotype 4a (strain HCC23).